Reading from the N-terminus, the 239-residue chain is NAD-dependent protein deacylase (239 aa).

The Deacetylase sirtuin-type domain occupies 1–239; it reads MNVLILTGAG…PKLLNHFSAM (239 aa). Position 8 to 27 (8 to 27) interacts with NAD(+); that stretch reads GAGISAESGIPTFRDANGLW. Substrate is bound by residues Tyr52 and Arg55. 93-96 contributes to the NAD(+) binding site; that stretch reads QNID. His111 serves as the catalytic Proton acceptor. NAD(+) contacts are provided by residues 182–184, 207–209, and Ala225; these read GTS and NLD.

This sequence belongs to the sirtuin family. Class III subfamily.

The protein resides in the cytoplasm. It catalyses the reaction N(6)-acetyl-L-lysyl-[protein] + NAD(+) + H2O = 2''-O-acetyl-ADP-D-ribose + nicotinamide + L-lysyl-[protein]. It carries out the reaction N(6)-succinyl-L-lysyl-[protein] + NAD(+) + H2O = 2''-O-succinyl-ADP-D-ribose + nicotinamide + L-lysyl-[protein]. NAD-dependent lysine deacetylase and desuccinylase that specifically removes acetyl and succinyl groups on target proteins. Modulates the activities of several proteins which are inactive in their acylated form. The sequence is that of NAD-dependent protein deacylase from Rhodopirellula baltica (strain DSM 10527 / NCIMB 13988 / SH1).